A 72-amino-acid polypeptide reads, in one-letter code: Mitotic-spindle organizing protein 1 (72 aa).

This sequence belongs to the MOZART1 family. Part of the gamma-tubulin complex.

The protein localises to the cytoplasm. Its subcellular location is the cytoskeleton. It localises to the microtubule organizing center. The protein resides in the centrosome. It is found in the spindle. In terms of biological role, required for gamma-tubulin complex recruitment to the centrosome. The chain is Mitotic-spindle organizing protein 1 (mzt1) from Xenopus tropicalis (Western clawed frog).